The primary structure comprises 432 residues: Lipoyl synthase, mitochondrial (432 aa).

A compositionally biased stretch (low complexity) spans 32 to 68 (TLGATPGSTSTSTSTSTATTTTLESTSTSTSGDATET). The segment at 32-71 (TLGATPGSTSTSTSTSTATTTTLESTSTSTSGDATETTIK) is disordered. The [4Fe-4S] cluster site is built by Cys150, Cys155, Cys161, Cys180, Cys184, Cys187, and Ser395. Residues 165-384 (KKSEATATIM…RDVALEMGFL (220 aa)) enclose the Radical SAM core domain.

This sequence belongs to the radical SAM superfamily. Lipoyl synthase family. Requires [4Fe-4S] cluster as cofactor.

Its subcellular location is the mitochondrion. The catalysed reaction is [[Fe-S] cluster scaffold protein carrying a second [4Fe-4S](2+) cluster] + N(6)-octanoyl-L-lysyl-[protein] + 2 oxidized [2Fe-2S]-[ferredoxin] + 2 S-adenosyl-L-methionine + 4 H(+) = [[Fe-S] cluster scaffold protein] + N(6)-[(R)-dihydrolipoyl]-L-lysyl-[protein] + 4 Fe(3+) + 2 hydrogen sulfide + 2 5'-deoxyadenosine + 2 L-methionine + 2 reduced [2Fe-2S]-[ferredoxin]. The protein operates within protein modification; protein lipoylation via endogenous pathway; protein N(6)-(lipoyl)lysine from octanoyl-[acyl-carrier-protein]: step 2/2. Functionally, catalyzes the radical-mediated insertion of two sulfur atoms into the C-6 and C-8 positions of the octanoyl moiety bound to the lipoyl domains of lipoate-dependent enzymes, thereby converting the octanoylated domains into lipoylated derivatives. In Lodderomyces elongisporus (strain ATCC 11503 / CBS 2605 / JCM 1781 / NBRC 1676 / NRRL YB-4239) (Yeast), this protein is Lipoyl synthase, mitochondrial.